The chain runs to 379 residues: Succinyl-diaminopimelate desuccinylase (379 aa).

His-70 contacts Zn(2+). The active site involves Asp-72. Asp-103 contributes to the Zn(2+) binding site. Glu-137 (proton acceptor) is an active-site residue. Zn(2+)-binding residues include Glu-138, Glu-166, and His-352.

This sequence belongs to the peptidase M20A family. DapE subfamily. Homodimer. The cofactor is Zn(2+). Co(2+) is required as a cofactor.

It carries out the reaction N-succinyl-(2S,6S)-2,6-diaminopimelate + H2O = (2S,6S)-2,6-diaminopimelate + succinate. It functions in the pathway amino-acid biosynthesis; L-lysine biosynthesis via DAP pathway; LL-2,6-diaminopimelate from (S)-tetrahydrodipicolinate (succinylase route): step 3/3. Catalyzes the hydrolysis of N-succinyl-L,L-diaminopimelic acid (SDAP), forming succinate and LL-2,6-diaminopimelate (DAP), an intermediate involved in the bacterial biosynthesis of lysine and meso-diaminopimelic acid, an essential component of bacterial cell walls. The protein is Succinyl-diaminopimelate desuccinylase of Shewanella sp. (strain W3-18-1).